We begin with the raw amino-acid sequence, 512 residues long: Cytokinin hydroxylase (512 aa).

Residues 2–22 traverse the membrane as a helical segment; sequence MVTLVLKYVLVIVMTLILRVL. C458 contacts heme.

The protein belongs to the cytochrome P450 family. It depends on heme as a cofactor. As to expression, specifically expressed in roots.

Its subcellular location is the membrane. It carries out the reaction N(6)-(dimethylallyl)adenosine 5'-phosphate + NADPH + O2 + H(+) = 9-ribosyl-trans-zeatin 5'-phosphate + NADP(+) + H2O. It catalyses the reaction N(6)-(dimethylallyl)adenosine 5'-diphosphate + NADPH + O2 + H(+) = 9-ribosyl-trans-zeatin 5'-diphosphate + NADP(+) + H2O. The catalysed reaction is N(6)-(dimethylallyl)adenosine 5'-triphosphate + NADPH + O2 + H(+) = 9-ribosyl-trans-zeatin 5'-triphosphate + NADP(+) + H2O. Its function is as follows. Cytokinin hydroxylase that catalyzes the biosynthesis of trans-zeatin via the isopentenyladenine riboside 5'-monophosphate (iPRMP)-dependent pathway. Can use isopentenyladenosine-5'-monophosphate, isopentenyladenosine-5'-diphosphate and isopentenyladenosine-5'-triphosphate as substrate. The sequence is that of Cytokinin hydroxylase (CYP735A2) from Arabidopsis thaliana (Mouse-ear cress).